The following is a 292-amino-acid chain: Formamidopyrimidine-DNA glycosylase (292 aa).

Pro2 serves as the catalytic Schiff-base intermediate with DNA. Glu3 serves as the catalytic Proton donor. Catalysis depends on Lys61, which acts as the Proton donor; for beta-elimination activity. Residues His103, Arg122, and Lys168 each contribute to the DNA site. The FPG-type zinc-finger motif lies at 254–288; the sequence is DAYGREGEHCRRCGAVMRREKFMNRSSFYCPRCQP. Arg278 serves as the catalytic Proton donor; for delta-elimination activity.

This sequence belongs to the FPG family. As to quaternary structure, monomer. Zn(2+) serves as cofactor.

The enzyme catalyses Hydrolysis of DNA containing ring-opened 7-methylguanine residues, releasing 2,6-diamino-4-hydroxy-5-(N-methyl)formamidopyrimidine.. The catalysed reaction is 2'-deoxyribonucleotide-(2'-deoxyribose 5'-phosphate)-2'-deoxyribonucleotide-DNA = a 3'-end 2'-deoxyribonucleotide-(2,3-dehydro-2,3-deoxyribose 5'-phosphate)-DNA + a 5'-end 5'-phospho-2'-deoxyribonucleoside-DNA + H(+). In terms of biological role, involved in base excision repair of DNA damaged by oxidation or by mutagenic agents. Acts as a DNA glycosylase that recognizes and removes damaged bases. Has a preference for oxidized purines, such as 7,8-dihydro-8-oxoguanine (8-oxoG). Has AP (apurinic/apyrimidinic) lyase activity and introduces nicks in the DNA strand. Cleaves the DNA backbone by beta-delta elimination to generate a single-strand break at the site of the removed base with both 3'- and 5'-phosphates. The polypeptide is Formamidopyrimidine-DNA glycosylase (Mycobacterium ulcerans (strain Agy99)).